A 163-amino-acid polypeptide reads, in one-letter code: Protein-export protein SecB (163 aa).

The protein belongs to the SecB family. In terms of assembly, homotetramer, a dimer of dimers. One homotetramer interacts with 1 SecA dimer.

The protein resides in the cytoplasm. In terms of biological role, one of the proteins required for the normal export of preproteins out of the cell cytoplasm. It is a molecular chaperone that binds to a subset of precursor proteins, maintaining them in a translocation-competent state. It also specifically binds to its receptor SecA. This Brucella anthropi (strain ATCC 49188 / DSM 6882 / CCUG 24695 / JCM 21032 / LMG 3331 / NBRC 15819 / NCTC 12168 / Alc 37) (Ochrobactrum anthropi) protein is Protein-export protein SecB.